The sequence spans 511 residues: DnaJ homolog 1, mitochondrial (511 aa).

The N-terminal 55 residues, 1 to 55 (MAFQQGVLSRCSGVFRHHVGHSRHINNILYRHAIAFASIAPRIPKSSFHTSAIRN), are a transit peptide targeting the mitochondrion. The region spanning 59-127 (FKDPYDTLGL…RQQYDQFGPA (69 aa)) is the J domain. Residues 217–297 (SKNVQLRFSA…CHGEGVQVNR (81 aa)) form a CR-type zinc finger. 4 CXXCXGXG motif repeats span residues 230-237 (CSTCSGTG), 247-254 (CSTCHGTG), 269-276 (CPTCNGEG), and 285-292 (CTKCHGEG).

It localises to the mitochondrion. Plays a role in mitochondrial biogenesis and protein folding. This chain is DnaJ homolog 1, mitochondrial (MDJ1), found in Saccharomyces cerevisiae (strain ATCC 204508 / S288c) (Baker's yeast).